The chain runs to 179 residues: Large ribosomal subunit protein uL5 (179 aa).

It belongs to the universal ribosomal protein uL5 family. In terms of assembly, part of the 50S ribosomal subunit; part of the 5S rRNA/L5/L18/L25 subcomplex. Contacts the 5S rRNA and the P site tRNA. Forms a bridge to the 30S subunit in the 70S ribosome.

Its function is as follows. This is one of the proteins that bind and probably mediate the attachment of the 5S RNA into the large ribosomal subunit, where it forms part of the central protuberance. In the 70S ribosome it contacts protein S13 of the 30S subunit (bridge B1b), connecting the 2 subunits; this bridge is implicated in subunit movement. Contacts the P site tRNA; the 5S rRNA and some of its associated proteins might help stabilize positioning of ribosome-bound tRNAs. The protein is Large ribosomal subunit protein uL5 of Pseudomonas fluorescens (strain ATCC BAA-477 / NRRL B-23932 / Pf-5).